The primary structure comprises 181 residues: Caltractin ICL1a (181 aa).

The interval 1–29 is disordered; that stretch reads MARRGQQPPPQQAPPAQKNQPGKFNPAEF. Low complexity predominate over residues 14–23; it reads PPAQKNQPGK. 4 consecutive EF-hand domains span residues 37 to 72, 73 to 108, 110 to 145, and 146 to 181; these read EEVLEIKEAFDLFDTDGTQSIDPKELKAAMTSLGFE, AKNQTIYQMISDLDTDGSGQIDFAEFLKLMTARISE, DSKADIQKVFNLFDSERAGVVTLKDLRKVAKELGET, and MDDSELQEMIDRADSDGDAQVTFEDFYNIMTKKTFA. The Ca(2+) site is built by Asp50, Asp52, Thr54, Ser56, Glu61, Asp86, Asp88, Ser90, Gln92, and Glu97.

It belongs to the centrin family. In terms of assembly, monomer.

It is found in the cytoplasm. Its subcellular location is the cytoskeleton. Plays a fundamental role in microtubule organizing center structure and function. Component of the infraciliary lattice (ICL) and the ciliary basal bodies. The polypeptide is Caltractin ICL1a (Icl1a) (Paramecium tetraurelia).